Consider the following 377-residue polypeptide: tRNA-specific 2-thiouridylase MnmA (377 aa).

ATP-binding positions include 12 to 19 (GMSGGVDS) and methionine 38. Positions 98–100 (NPD) are interaction with target base in tRNA. Cysteine 103 serves as the catalytic Nucleophile. An intrachain disulfide couples cysteine 103 to cysteine 200. ATP is bound at residue glycine 127. The interaction with tRNA stretch occupies residues 150–152 (KDQ). Cysteine 200 serves as the catalytic Cysteine persulfide intermediate. The segment at 314–315 (RY) is interaction with tRNA.

Belongs to the MnmA/TRMU family.

It localises to the cytoplasm. The catalysed reaction is S-sulfanyl-L-cysteinyl-[protein] + uridine(34) in tRNA + AH2 + ATP = 2-thiouridine(34) in tRNA + L-cysteinyl-[protein] + A + AMP + diphosphate + H(+). Functionally, catalyzes the 2-thiolation of uridine at the wobble position (U34) of tRNA, leading to the formation of s(2)U34. The sequence is that of tRNA-specific 2-thiouridylase MnmA from Limosilactobacillus fermentum (strain NBRC 3956 / LMG 18251) (Lactobacillus fermentum).